Here is a 356-residue protein sequence, read N- to C-terminus: Phospho-2-dehydro-3-deoxyheptonate aldolase, Tyr-sensitive (356 aa).

This sequence belongs to the class-I DAHP synthase family.

The catalysed reaction is D-erythrose 4-phosphate + phosphoenolpyruvate + H2O = 7-phospho-2-dehydro-3-deoxy-D-arabino-heptonate + phosphate. The protein operates within metabolic intermediate biosynthesis; chorismate biosynthesis; chorismate from D-erythrose 4-phosphate and phosphoenolpyruvate: step 1/7. In terms of biological role, stereospecific condensation of phosphoenolpyruvate (PEP) and D-erythrose-4-phosphate (E4P) giving rise to 3-deoxy-D-arabino-heptulosonate-7-phosphate (DAHP). This Salmonella typhi protein is Phospho-2-dehydro-3-deoxyheptonate aldolase, Tyr-sensitive (aroF).